The following is a 146-amino-acid chain: Snaclec rhodocytin subunit beta (146 aa).

A signal peptide spans methionine 1–alanine 23. 3 disulfide bridges follow: cysteine 25–cysteine 36, cysteine 53–cysteine 142, and cysteine 119–cysteine 134. Residues tyrosine 32 to lysine 143 enclose the C-type lectin domain.

It belongs to the snaclec family. In terms of assembly, dimer (non-covalently linked) of heterodimers of subunits alpha and beta (disulfide-linked). As to expression, expressed by the venom gland.

It localises to the secreted. Its function is as follows. Elicits platelet aggregation by the binding to the C-type lectin domain family 1 member B (CLEC1B/CLEC2). Binding leads to tyrosine phosphorylation in the cytoplasmic tail of CLEC1B, which promotes the binding of spleen tyrosine kinase (Syk), subsequent activation of PLCgamma2, and platelet activation and aggregation. Binding to GPIbalpha (GP1BA) and alpha2/beta-1 (ITGA2/ITGB1) may also induce aggregation, but this is controversial. This chain is Snaclec rhodocytin subunit beta, found in Calloselasma rhodostoma (Malayan pit viper).